Consider the following 470-residue polypeptide: MTDDTWGLLRKRLLKTVGQNNFTTWIEPLELDQVDGGVATFHVPTNFMGNYVSQNFADLILHEFNKSGEAVQRLAFKVAANSPTRPVQPTMSEAIEEPAPLQTTVVDQLGNQEGNTSVKSPPEDLQAAPLDPRFTFDSFVVGKPNELAHAAARRVAEGGPVTFNPLVLYGGVGLGKTHLMHAIAWELKERNPELNVLYLSAEQFMYRFVQALRERKMMDFKHLFRSVDVLMVDDVQFIAGKDSTQEEFFHTFNALVDQNKQIIISADRAPGEIKDLEDRVKSRLQCGLVVDLHPTDYELRLGILQTKVQQNRKNYPDLKIADGVLELLAHRISTNVRVLEGALTRLFAFASLVGREIDMDLTQDCLADVLRASERKITVEEIQRKVSEYYNIRMSDIIGPKRLRSYARPRQVAMYLCKQLTSRSLPEIGRRFGGRDHTTVMHGVRRIEELKTIDGQIAEDVEMLRRSLEA.

Residues 1–79 (MTDDTWGLLR…AVQRLAFKVA (79 aa)) form a domain I, interacts with DnaA modulators region. Residues 79–128 (AANSPTRPVQPTMSEAIEEPAPLQTTVVDQLGNQEGNTSVKSPPEDLQAA) form a domain II region. Residues 129 to 350 (PLDPRFTFDS…GALTRLFAFA (222 aa)) are domain III, AAA+ region. ATP-binding residues include Gly173, Gly175, Lys176, and Thr177. The domain IV, binds dsDNA stretch occupies residues 351–470 (SLVGREIDMD…VEMLRRSLEA (120 aa)).

The protein belongs to the DnaA family. Oligomerizes as a right-handed, spiral filament on DNA at oriC.

It localises to the cytoplasm. Functionally, plays an essential role in the initiation and regulation of chromosomal replication. ATP-DnaA binds to the origin of replication (oriC) to initiate formation of the DNA replication initiation complex once per cell cycle. Binds the DnaA box (a 9 base pair repeat at the origin) and separates the double-stranded (ds)DNA. Forms a right-handed helical filament on oriC DNA; dsDNA binds to the exterior of the filament while single-stranded (ss)DNA is stabiized in the filament's interior. The ATP-DnaA-oriC complex binds and stabilizes one strand of the AT-rich DNA unwinding element (DUE), permitting loading of DNA polymerase. After initiation quickly degrades to an ADP-DnaA complex that is not apt for DNA replication. Binds acidic phospholipids. The protein is Chromosomal replication initiator protein DnaA of Ruegeria sp. (strain TM1040) (Silicibacter sp.).